The chain runs to 280 residues: Large ribosomal subunit protein uL2 (280 aa).

Disordered regions lie at residues 1 to 58 and 226 to 280; these read MAIR…GGGH and MNPV…KHGR. Composition is skewed to basic residues over residues 37 to 58 and 268 to 280; these read LHGH…GGGH and IVRR…KHGR.

The protein belongs to the universal ribosomal protein uL2 family. In terms of assembly, part of the 50S ribosomal subunit. Forms a bridge to the 30S subunit in the 70S ribosome.

Its function is as follows. One of the primary rRNA binding proteins. Required for association of the 30S and 50S subunits to form the 70S ribosome, for tRNA binding and peptide bond formation. It has been suggested to have peptidyltransferase activity; this is somewhat controversial. Makes several contacts with the 16S rRNA in the 70S ribosome. This chain is Large ribosomal subunit protein uL2, found in Mycolicibacterium paratuberculosis (strain ATCC BAA-968 / K-10) (Mycobacterium paratuberculosis).